Consider the following 742-residue polypeptide: 5-methyltetrahydropteroyltriglutamate--homocysteine methyltransferase (742 aa).

Residues 18–21 (REWK) and lysine 112 each bind 5-methyltetrahydropteroyltri-L-glutamate. L-homocysteine contacts are provided by residues 420–422 (IGS) and glutamate 473. Residues 420 to 422 (IGS) and glutamate 473 each bind L-methionine. Tryptophan 550 contributes to the 5-methyltetrahydropteroyltri-L-glutamate binding site. Aspartate 588 lines the L-homocysteine pocket. Residue aspartate 588 coordinates L-methionine. Glutamate 594 lines the 5-methyltetrahydropteroyltri-L-glutamate pocket. Zn(2+)-binding residues include histidine 630, cysteine 632, and glutamate 654. The Proton donor role is filled by histidine 683. Cysteine 715 lines the Zn(2+) pocket.

It belongs to the vitamin-B12 independent methionine synthase family. Zn(2+) is required as a cofactor.

The catalysed reaction is 5-methyltetrahydropteroyltri-L-glutamate + L-homocysteine = tetrahydropteroyltri-L-glutamate + L-methionine. The protein operates within amino-acid biosynthesis; L-methionine biosynthesis via de novo pathway; L-methionine from L-homocysteine (MetE route): step 1/1. Catalyzes the transfer of a methyl group from 5-methyltetrahydrofolate to homocysteine resulting in methionine formation. This is 5-methyltetrahydropteroyltriglutamate--homocysteine methyltransferase from Staphylococcus aureus (strain bovine RF122 / ET3-1).